Here is a 105-residue protein sequence, read N- to C-terminus: Nitrogen fixation nifHD region GlnB-like protein 1 (105 aa).

This sequence belongs to the P(II) protein family.

Could be involved in the regulation of nitrogen fixation. The sequence is that of Nitrogen fixation nifHD region GlnB-like protein 1 (glnBA) from Methanothermococcus thermolithotrophicus (Methanococcus thermolithotrophicus).